The chain runs to 639 residues: Threonine--tRNA ligase (639 aa).

The TGS domain occupies 1–61; it reads MINITLKDGK…KEDSELEILT (61 aa). Residues 242–532 form a catalytic region; sequence DHRKLGKELD…LIEHFAGAFP (291 aa). Zn(2+) contacts are provided by cysteine 333, histidine 384, and histidine 509.

It belongs to the class-II aminoacyl-tRNA synthetase family. As to quaternary structure, homodimer. Requires Zn(2+) as cofactor.

It localises to the cytoplasm. It catalyses the reaction tRNA(Thr) + L-threonine + ATP = L-threonyl-tRNA(Thr) + AMP + diphosphate + H(+). Functionally, catalyzes the attachment of threonine to tRNA(Thr) in a two-step reaction: L-threonine is first activated by ATP to form Thr-AMP and then transferred to the acceptor end of tRNA(Thr). Also edits incorrectly charged L-seryl-tRNA(Thr). This chain is Threonine--tRNA ligase, found in Clostridium tetani (strain Massachusetts / E88).